The following is a 441-amino-acid chain: Serum response factor-binding protein 1 (441 aa).

Coiled coils occupy residues lysine 52–glutamate 77 and leucine 118–alanine 140. Disordered regions lie at residues arginine 137 to lysine 342, phenylalanine 357 to valine 389, and glutamine 406 to aspartate 441. Positions serine 139–glutamate 152 are enriched in low complexity. Basic and acidic residues predominate over residues glycine 153–aspartate 183. Residue lysine 201 forms a Glycyl lysine isopeptide (Lys-Gly) (interchain with G-Cter in SUMO2) linkage. Serine 214 is modified (phosphoserine). Over residues aspartate 237–lysine 246 the composition is skewed to polar residues. Basic and acidic residues predominate over residues glutamate 269–tyrosine 282. Phosphoserine occurs at positions 276, 291, and 293. Residues lysine 308–proline 321 show a composition bias toward basic and acidic residues. Lysine 328 participates in a covalent cross-link: Glycyl lysine isopeptide (Lys-Gly) (interchain with G-Cter in SUMO2). Positions serine 366–aspartate 381 are enriched in basic and acidic residues.

Interacts with SRF. Forms complexes with SRF and SRF cofactors ARID2, MYOCD and NKX2-5. Interacts with the N-terminus of SLC2A4. Highly expressed in heart, skeletal muscle, liver, kidney, testis and brain. Also expressed in white adipose tissue. Expression is up-regulated in cardiomyopathic heart.

It localises to the cytoplasm. It is found in the perinuclear region. In terms of biological role, may be involved in regulating transcriptional activation of cardiac genes during the aging process. May play a role in biosynthesis and/or processing of SLC2A4 in adipose cells. The polypeptide is Serum response factor-binding protein 1 (Mus musculus (Mouse)).